The primary structure comprises 258 residues: Phosphate import ATP-binding protein PstB (258 aa).

One can recognise an ABC transporter domain in the interval 13–253 (IEVENLNLWY…PKEQSTEDYI (241 aa)). An ATP-binding site is contributed by 45–52 (GPSGCGKS).

It belongs to the ABC transporter superfamily. Phosphate importer (TC 3.A.1.7) family. The complex is composed of two ATP-binding proteins (PstB), two transmembrane proteins (PstC and PstA) and a solute-binding protein (PstS).

The protein resides in the cell membrane. It carries out the reaction phosphate(out) + ATP + H2O = ADP + 2 phosphate(in) + H(+). Part of the ABC transporter complex PstSACB involved in phosphate import. Responsible for energy coupling to the transport system. This is Phosphate import ATP-binding protein PstB from Methanosarcina acetivorans (strain ATCC 35395 / DSM 2834 / JCM 12185 / C2A).